Consider the following 674-residue polypeptide: Pannexin-2 (674 aa).

Over 11-53 (MATALLAGEKLRELILPGSQDDKAGALAALLLQLKLELPFDRV) the chain is Cytoplasmic. The chain crosses the membrane as a helical span at residues 54 to 74 (VTIGTVLVPILLVTLVFTKNF). Over 75 to 125 (AEEPIYCYTPHNFTRDQALYARGYCWTELRDALPGVDASLWPSLFEHKFLP) the chain is Extracellular. The N-linked (GlcNAc...) asparagine glycan is linked to Asn-86. A helical transmembrane segment spans residues 126-146 (YALLAFAAIMYVPALGWEFLA). The Cytoplasmic portion of the chain corresponds to 147-230 (STRLTSELNF…NFLAKLYLAR (84 aa)). Residues 231-251 (HVLILLLSVVPISYLCTYYAT) traverse the membrane as a helical segment. Residues 252 to 295 (QKQNEFTCALGASPDGPVGSAGPTVRVSCKLPSVQLQRIIAGVD) are Extracellular-facing. The chain crosses the membrane as a helical span at residues 296 to 316 (IVLLCFMNLIILVNLIHLFIF). Residues 317 to 674 (RKSNFIFDKL…PRTVVSTVEF (358 aa)) lie on the Cytoplasmic side of the membrane. The segment covering 394-408 (TTPTVRDSGIQTVDP) has biased composition (polar residues). Disordered stretches follow at residues 394–426 (TTPTVRDSGIQTVDPSINPAEPEGSAEPPVVKR) and 485–510 (AHHYKGSGGDTGPSSAPPAASEKKHT). Ser-590 and Ser-601 each carry phosphoserine.

This sequence belongs to the pannexin family. In terms of assembly, forms PANX1/PANX2-heteromeric intercellular channels on coexpression in paired Xenopus oocytes. Does not form homomeric channels. In terms of processing, S-palmitoylated in neural stem and progenitor cells. Post-translationally, cleaved by CASP3 and CASP7 during apoptosis. Cleavage has no effect on it function. As to expression, expressed in the eye, thyroid, prostate, kidney and liver. Abundantly expressed in the CNS, including hippocampus, olfactory bulb, cortex, cerebellum. Not detected in the white matter.

The protein localises to the cell membrane. Its subcellular location is the golgi apparatus membrane. It localises to the endoplasmic reticulum membrane. In terms of biological role, structural component of the gap junctions and the hemichannels. The sequence is that of Pannexin-2 (Panx2) from Rattus norvegicus (Rat).